The primary structure comprises 132 residues: Two-component response regulator ORR42 (132 aa).

In terms of domain architecture, Response regulatory spans 11-125 (RALLVEDIKV…LEHILQETRS (115 aa)). The residue at position 61 (Asp61) is a 4-aspartylphosphate.

It belongs to the ARR family. Type-C subfamily. Two-component system major event consists of a His-to-Asp phosphorelay between a sensor histidine kinase (HK) and a response regulator (RR). In plants, the His-to-Asp phosphorelay involves an additional intermediate named Histidine-containing phosphotransfer protein (HPt). This multistep phosphorelay consists of a His-Asp-His-Asp sequential transfer of a phosphate group between first a His and an Asp of the HK protein, followed by the transfer to a conserved His of the HPt protein and finally the transfer to an Asp in the receiver domain of the RR protein.

Its function is as follows. Functions as a response regulator involved in His-to-Asp phosphorelay signal transduction system. Phosphorylation of the Asp residue in the receiver domain activates the ability of the protein to promote the transcription of target genes. May directly activate some type-A response regulators in response to cytokinins. This is Two-component response regulator ORR42 from Oryza sativa subsp. japonica (Rice).